A 436-amino-acid chain; its full sequence is UPF0597 protein YhaM (436 aa).

This sequence belongs to the UPF0597 family.

The chain is UPF0597 protein YhaM from Shigella dysenteriae serotype 1 (strain Sd197).